Here is a 102-residue protein sequence, read N- to C-terminus: MDRQNIRIRLKAFDHRVLDHSTREIVNTAKRTGATVRGPIPLPTRIEKFTVNRSPHIDKKSREQFEIRTHKRVLDIVDPTPQTVDALMKLDLSAGVDVEIKL.

Belongs to the universal ribosomal protein uS10 family. In terms of assembly, part of the 30S ribosomal subunit.

Functionally, involved in the binding of tRNA to the ribosomes. In Phenylobacterium zucineum (strain HLK1), this protein is Small ribosomal subunit protein uS10.